The sequence spans 542 residues: Organic anion transporter 3 (542 aa).

At 1–20 the chain is on the cytoplasmic side; the sequence is MTFSEILDRVGSMGRFQFLH. S4 is subject to Phosphoserine. The chain crosses the membrane as a helical span at residues 21–41; it reads VAILGLPILNMANHNLLQIFT. The Extracellular segment spans residues 42 to 123; that stretch reads AATPVHHCRP…LVCNSNKLKE (82 aa). An N-linked (GlcNAc...) asparagine glycan is attached at N86. A helical transmembrane segment spans residues 124–144; that stretch reads MAQSIFMAGILIGGLVLGDLS. Topologically, residues 145–154 are cytoplasmic; sequence DRFGRRPILT. The helical transmembrane segment at 155–175 threads the bilayer; that stretch reads CSYLLLAASGSGAAFSPTFPI. Y176 is a topological domain (extracellular). A helical transmembrane segment spans residues 177 to 197; sequence MVFRFLCGFGISGITLSTVIL. The Cytoplasmic portion of the chain corresponds to 198-212; sequence NVEWVPTRMRAIMST. A helical transmembrane segment spans residues 213-233; that stretch reads ALGYCYTFGQFILPGLAYAIP. Residues 234–236 lie on the Extracellular side of the membrane; the sequence is QWR. The chain crosses the membrane as a helical span at residues 237-257; the sequence is WLQLTVSIPFFIFFLSSWWTP. Residues 258-327 are Cytoplasmic-facing; that stretch reads ESIRWLVLSG…FRIPMLRRMT (70 aa). The chain crosses the membrane as a helical span at residues 328–348; the sequence is FCLSLAWFATGFAYYSLAMGV. The Extracellular portion of the chain corresponds to 349 to 354; the sequence is EEFGVN. The chain crosses the membrane as a helical span at residues 355-375; the sequence is LYILQIIFGGVDVPAKFITIL. Residues 376 to 386 are Cytoplasmic-facing; sequence SLSYLGRHTTQ. The chain crosses the membrane as a helical span at residues 387–407; it reads AAALLLAGGAILALTFVPLDL. The Extracellular portion of the chain corresponds to 408–471; it reads QTVRTVLAVF…LVKITGEVQP (64 aa). A helical transmembrane segment spans residues 472–492; the sequence is FIPNIIYGITALLGGSAAFFL. Topologically, residues 493-542 are cytoplasmic; the sequence is PETLNQPLPETIEDLENWSLRAKKPKQEPEVEKASQRIPLQPHGPGLGSS. Residues 515-542 are disordered; sequence KKPKQEPEVEKASQRIPLQPHGPGLGSS. Residues 517–527 are compositionally biased toward basic and acidic residues; sequence PKQEPEVEKAS.

Belongs to the major facilitator (TC 2.A.1) superfamily. Organic cation transporter (TC 2.A.1.19) family.

It localises to the basolateral cell membrane. The enzyme catalyses estrone 3-sulfate(out) + glutarate(in) = estrone 3-sulfate(in) + glutarate(out). The catalysed reaction is estrone 3-sulfate(in) + 2-oxoglutarate(out) = estrone 3-sulfate(out) + 2-oxoglutarate(in). It carries out the reaction glutarate(in) + 2-oxoglutarate(out) = glutarate(out) + 2-oxoglutarate(in). It catalyses the reaction urate(in) + 2-oxoglutarate(out) = urate(out) + 2-oxoglutarate(in). The enzyme catalyses taurocholate(out) + glutarate(in) = taurocholate(in) + glutarate(out). The catalysed reaction is dehydroepiandrosterone 3-sulfate(out) + glutarate(in) = dehydroepiandrosterone 3-sulfate(in) + glutarate(out). It carries out the reaction prostaglandin F2alpha(out) + glutarate(in) = prostaglandin F2alpha(in) + glutarate(out). It catalyses the reaction prostaglandin F2alpha(out) + 2-oxoglutarate(in) = prostaglandin F2alpha(in) + 2-oxoglutarate(out). The enzyme catalyses (R)-carnitine(out) + 2-oxoglutarate(in) = (R)-carnitine(in) + 2-oxoglutarate(out). The catalysed reaction is glutarate(in) + (R)-carnitine(out) = glutarate(out) + (R)-carnitine(in). It carries out the reaction prostaglandin E2(out) + 2-oxoglutarate(in) = prostaglandin E2(in) + 2-oxoglutarate(out). It catalyses the reaction prostaglandin E2(out) + glutarate(in) = prostaglandin E2(in) + glutarate(out). The enzyme catalyses urate(in) + glutarate(out) = urate(out) + glutarate(in). The catalysed reaction is taurocholate(out) + 2-oxoglutarate(in) = taurocholate(in) + 2-oxoglutarate(out). It carries out the reaction dehydroepiandrosterone 3-sulfate(out) + 2-oxoglutarate(in) = dehydroepiandrosterone 3-sulfate(in) + 2-oxoglutarate(out). It catalyses the reaction kynurenate(out) + a dicarboxylate(in) = kynurenate(in) + a dicarboxylate(out). The enzyme catalyses (indol-3-yl)acetate(out) + a dicarboxylate(in) = (indol-3-yl)acetate(in) + a dicarboxylate(out). The catalysed reaction is indoxyl sulfate(out) + a dicarboxylate(in) = indoxyl sulfate(in) + a dicarboxylate(out). It carries out the reaction N-benzoylglycine(out) + a dicarboxylate(in) = N-benzoylglycine(in) + a dicarboxylate(out). It catalyses the reaction 3-carboxy-4-methyl-5-propyl-2-furanpropanoate(out) + a dicarboxylate(in) = 3-carboxy-4-methyl-5-propyl-2-furanpropanoate(in) + a dicarboxylate(out). The enzyme catalyses (6R)-L-erythro-5,6,7,8-tetrahydrobiopterin(out) + a dicarboxylate(in) = (6R)-L-erythro-5,6,7,8-tetrahydrobiopterin(in) + a dicarboxylate(out). The catalysed reaction is L-erythro-7,8-dihydrobiopterin(out) + a dicarboxylate(in) = L-erythro-7,8-dihydrobiopterin(in) + a dicarboxylate(out). It carries out the reaction L-sepiapterin(out) + a dicarboxylate(in) = L-sepiapterin(in) + a dicarboxylate(out). In terms of biological role, functions as an organic anion/dicarboxylate exchanger that couples organic anion uptake indirectly to the sodium gradient. Transports organic anions such as estrone 3-sulfate (E1S) and urate in exchange for dicarboxylates such as glutarate or ketoglutarate (2-oxoglutarate). Plays an important role in the excretion of endogenous and exogenous organic anions, especially from the kidney and the brain. E1S transport is pH- and chloride-dependent and may also involve E1S/cGMP exchange. Responsible for the transport of prostaglandin E2 (PGE2) and prostaglandin F2(alpha) (PGF2(alpha)) in the basolateral side of the renal tubule. Involved in the transport of neuroactive tryptophan metabolites kynurenate and xanthurenate. Functions as a biopterin transporters involved in the uptake and the secretion of coenzymes tetrahydrobiopterin (BH4), dihydrobiopterin (BH2) and sepiapterin to urine, thereby determining baseline levels of blood biopterins. May be involved in the basolateral transport of steviol, a metabolite of the popular sugar substitute stevioside. May participate in the detoxification/ renal excretion of drugs and xenobiotics, such as the histamine H(2)-receptor antagonists fexofenadine and cimetidine, the antibiotic benzylpenicillin (PCG), the anionic herbicide 2,4-dichloro-phenoxyacetate (2,4-D), the diagnostic agent p-aminohippurate (PAH), the antiviral acyclovir (ACV), and the mycotoxin ochratoxin (OTA), by transporting these exogenous organic anions across the cell membrane in exchange for dicarboxylates such as 2-oxoglutarate. Contributes to the renal uptake of potent uremic toxins (indoxyl sulfate (IS), indole acetate (IA), hippurate/N-benzoylglycine (HA) and 3-carboxy-4-methyl-5-propyl-2-furanpropionate (CMPF)), pravastatin, PCG, E1S and dehydroepiandrosterone sulfate (DHEAS), and is partly involved in the renal uptake of temocaprilat (an angiotensin-converting enzyme (ACE) inhibitor). May contribute to the release of cortisol in the adrenals. Involved in one of the detoxification systems on the choroid plexus (CP), removes substrates such as E1S or taurocholate (TC), PCG, 2,4-D and PAH, from the cerebrospinal fluid (CSF) to the blood for eventual excretion in urine and bile. Also contributes to the uptake of several other organic compounds such as the prostanoids prostaglandin E(2) and prostaglandin F(2-alpha), L-carnitine, and the therapeutic drugs allopurinol, 6-mercaptopurine (6-MP) and 5-fluorouracil (5-FU). Mediates the transport of PAH, PCG, and the statins pravastatin and pitavastatin, from the cerebrum into the blood circulation across the blood-brain barrier (BBB). In summary, plays a role in the efflux of drugs and xenobiotics, helping reduce their undesired toxicological effects on the body. In Pongo abelii (Sumatran orangutan), this protein is Organic anion transporter 3 (SLC22A8).